A 256-amino-acid chain; its full sequence is Hemin import ATP-binding protein HmuV (256 aa).

The 238-residue stretch at 2–239 (IHAFAVSVIR…ANVREVYQVD (238 aa)) folds into the ABC transporter domain. An ATP-binding site is contributed by 34-41 (GPNGAGKS).

Belongs to the ABC transporter superfamily. Heme (hemin) importer (TC 3.A.1.14.5) family. As to quaternary structure, the complex is composed of two ATP-binding proteins (HmuV), two transmembrane proteins (HmuU) and a solute-binding protein (HmuT).

The protein resides in the cell inner membrane. Functionally, part of the ABC transporter complex HmuTUV involved in hemin import. Responsible for energy coupling to the transport system. This chain is Hemin import ATP-binding protein HmuV, found in Hahella chejuensis (strain KCTC 2396).